The following is a 150-amino-acid chain: 3-hydroxyacyl-[acyl-carrier-protein] dehydratase FabZ (150 aa).

The active site involves His-54.

This sequence belongs to the thioester dehydratase family. FabZ subfamily.

The protein localises to the cytoplasm. It carries out the reaction a (3R)-hydroxyacyl-[ACP] = a (2E)-enoyl-[ACP] + H2O. Involved in unsaturated fatty acids biosynthesis. Catalyzes the dehydration of short chain beta-hydroxyacyl-ACPs and long chain saturated and unsaturated beta-hydroxyacyl-ACPs. The protein is 3-hydroxyacyl-[acyl-carrier-protein] dehydratase FabZ of Vibrio parahaemolyticus serotype O3:K6 (strain RIMD 2210633).